Reading from the N-terminus, the 399-residue chain is Chromosomal replication initiator protein DnaA (399 aa).

Positions 1 to 64 are domain I, interacts with DnaA modulators; it reads MELNALIKKI…EEEVRKLIEV (64 aa). A domain II region spans residues 64–77; it reads VKEKEEKKKVEIKD. A domain III, AAA+ region region spans residues 78-290; that stretch reads FLNPKYTLEN…GKIKLIKLKG (213 aa). 8 residues coordinate ADP: Ile-89, Asn-94, Gly-122, Thr-123, Gly-124, Lys-125, Thr-126, and His-127. Ile-89 lines the ATP pocket. Position 122 (Gly-122) interacts with ATP. ATP contacts are provided by Gly-124, Lys-125, Thr-126, and His-127. Residue Thr-126 participates in Mg(2+) binding. Val-156 contacts ssDNA. Asp-180 lines the ATP pocket. Asp-181 serves as a coordination point for Mg(2+). SsDNA contacts are provided by Lys-188, Arg-190, and Thr-191. Arg-277 lines the ATP pocket. The segment at 291–399 is domain IV, binds dsDNA; it reads FEGLERKERK…LEKQAFDKIC (109 aa).

Belongs to the DnaA family. In terms of assembly, in the presence of ATP analog AMP-PCP forms a linear, right-handed spiral filament with 4 subunits arranged head-to-tail, about 122 Angstroms wide and about 360 Angstroms long. Mg(2+)-AMP-PCP binds at the subunit interface with the gamma phosphate coordinated by adjacent subunits. dsDNA probably wraps on the outside of the filament. ssDNA binds to the center of the helical filament via the AAA+ domain, which stretches the DNA.

The protein resides in the cytoplasm. Plays an essential role in the initiation and regulation of chromosomal replication. ATP-DnaA binds to the origin of replication (oriC) to initiate formation of the DNA replication initiation complex once per cell cycle. Binds the DnaA box (a 9 base pair repeat at the origin) and separates the double-stranded (ds)DNA. Forms a right-handed helical filament on oriC DNA; dsDNA binds to the exterior of the filament while single-stranded (ss)DNA is stabiized in the filament's interior. The ATP-DnaA-oriC complex binds and stabilizes one strand of the AT-rich DNA unwinding element (DUE), permitting loading of DNA polymerase. After initiation quickly degrades to an ADP-DnaA complex that is not apt for DNA replication. Binds acidic phospholipids. Functionally, able to melt short unstable dsDNA (15-mer with melting temperature, TM, 43 degrees Celsius) in the presence of a non-hydrolyzable ATP analog; a more stable dsDNA (20-mer, TM 55 degrees Celsius) is poor substrate. ADP does not support dsDNA melting. Addition of DnaA-AMP-PCP (an ATP analog, beta,gamma-methyleneadenosine 5'-triphosphate) to an oric-containing plasmid causes a DNA shift to more positively supercoiled topological species, stabilizing a positive wrap and right-handed filament as seen in the crystal structure without DNA. Filament formation generated by positive supercoiling may destabilize the origin unwinding element through compensatory negative supercoiling strain. In Aquifex aeolicus (strain VF5), this protein is Chromosomal replication initiator protein DnaA.